The following is a 117-amino-acid chain: MPSPGTVCSLLLFSMLWADLAMAGSSFLSPEHQKVQQRKESKKPPAKLQPRALEGLIHPEDTSQVEGAEDELEIRFNAPFDVGIKLSGAQYHQHGQALGKFLQDVLWEEADEVLADE.

The first 23 residues, 1–23 (MPSPGTVCSLLLFSMLWADLAMA), serve as a signal peptide directing secretion. Ser-26 carries O-decanoyl serine; alternate lipidation. Ser-26 carries the O-hexanoyl serine; alternate lipid modification. The O-octanoyl serine; alternate moiety is linked to residue Ser-26. The interval 29-52 (SPEHQKVQQRKESKKPPAKLQPRA) is disordered. The span at 31 to 43 (EHQKVQQRKESKK) shows a compositional bias: basic and acidic residues. Residues 52-75 (ALEGLIHPEDTSQVEGAEDELEIR) constitute a propeptide, removed in mature form. A Leucine amide modification is found at Leu-98. The propeptide at 99–117 (GKFLQDVLWEEADEVLADE) is removed in mature form.

This sequence belongs to the motilin family. Post-translationally, O-octanoylated by GOAT/MBOAT4. O-octanoylation or O-decanoylation is essential for ghrelin activity. The O-decanoylated forms Ghrelin-27-C10 and Ghrelin-28-C10 differ in the length of the carbon backbone of the carboxylic acid bound to Ser-26. A small fraction of ghrelin, ghrelin-27-C10:1, ghrelin-27-C10:2, ghrelin-28-C8:1, ghrelin-28-C10:1, and ghrelin-28-C10:2, may be modified with singly or doubly unsaturated carboxylic acids. In terms of processing, amidation of Leu-98 is essential for obestatin activity.

The protein resides in the secreted. Ghrelin is the ligand for growth hormone secretagogue receptor type 1 (GHSR). Induces the release of growth hormone from the pituitary. Has an appetite-stimulating effect, induces adiposity and stimulates gastric acid secretion. Involved in growth regulation. In terms of biological role, obestatin may be the ligand for GPR39. May have an appetite-reducing effect resulting in decreased food intake. May reduce gastric emptying activity and jejunal motility. This chain is Appetite-regulating hormone (GHRL), found in Felis catus (Cat).